Consider the following 275-residue polypeptide: Large ribosomal subunit protein uL2c (275 aa).

2 disordered regions span residues 36–56 and 224–275; these read KNHR…HRGK and VMNP…RKRK. The segment covering 255-275 has biased composition (basic residues); that stretch reads LGRKTRKKPKYSNRYILRKRK.

This sequence belongs to the universal ribosomal protein uL2 family. As to quaternary structure, part of the 50S ribosomal subunit.

It is found in the plastid. Its subcellular location is the chloroplast. The protein is Large ribosomal subunit protein uL2c (rpl2) of Gracilaria tenuistipitata var. liui (Red alga).